The primary structure comprises 82 residues: Omega-ctenitoxin-Pn1a (82 aa).

Residues 1–21 (MWLKIQVFLLAITLITLGIQA) form the signal peptide. The propeptide occupies 22–37 (EPNSSPNNPLIEEEAR). 4 cysteine pairs are disulfide-bonded: C39–C54, C46–C59, C53–C70, and C61–C68. Positions 72–82 (KKFIEFFGGGK) are excised as a propeptide.

Belongs to the neurotoxin 02 (plectoxin) family. In terms of tissue distribution, expressed by the venom gland.

The protein resides in the secreted. Its function is as follows. Antagonist of L-type calcium channels (Cav1/CACNA1). Induces immediate clockwise gyration and flaccid paralysis after 6 hours at dose levels of 5 ug per mouse. This Phoneutria nigriventer (Brazilian armed spider) protein is Omega-ctenitoxin-Pn1a.